A 172-amino-acid chain; its full sequence is Large ribosomal subunit protein uL10 (172 aa).

It belongs to the universal ribosomal protein uL10 family. In terms of assembly, part of the ribosomal stalk of the 50S ribosomal subunit. The N-terminus interacts with L11 and the large rRNA to form the base of the stalk. The C-terminus forms an elongated spine to which L12 dimers bind in a sequential fashion forming a multimeric L10(L12)X complex.

In terms of biological role, forms part of the ribosomal stalk, playing a central role in the interaction of the ribosome with GTP-bound translation factors. The polypeptide is Large ribosomal subunit protein uL10 (Dinoroseobacter shibae (strain DSM 16493 / NCIMB 14021 / DFL 12)).